The following is a 398-amino-acid chain: O-methyltransferase aoiO (398 aa).

Aspartate 251 is a binding site for S-adenosyl-L-methionine. Histidine 299 (proton acceptor) is an active-site residue.

It belongs to the class I-like SAM-binding methyltransferase superfamily. Cation-independent O-methyltransferase family.

O-methyltransferase; part of the gene cluster that mediates the biosynthesis of a methylated derivative of known natural products orthosporin and diaporthin. Seems not to be involved in the biosynthesis of the identified final product of the pathway and its function has still to be determined. This is O-methyltransferase aoiO from Aspergillus oryzae (strain ATCC 42149 / RIB 40) (Yellow koji mold).